A 56-amino-acid chain; its full sequence is uncharacterized protein (56 aa).

Residues 21–38 (HTHTPHPHHTHTHTHHTP) show a composition bias toward basic residues. Residues 21–40 (HTHTPHPHHTHTHTHHTPTH) are disordered.

This is an uncharacterized protein from Saccharomyces cerevisiae (strain ATCC 204508 / S288c) (Baker's yeast).